The chain runs to 416 residues: Cyclin-L1-1 (416 aa).

Residues 286–416 (KCTAGSANND…DSSKDRRRHH (131 aa)) form a disordered region. Basic and acidic residues-rich tracts occupy residues 304–315 (PHEKATDSKKSG), 328–374 (SYER…DKLK), 384–393 (RLKDSGGHSD), and 401–410 (RDRDYRDSSK).

The protein belongs to the cyclin family. Cyclin L subfamily. In terms of assembly, forms a complex with CDKG1. Interacts with MOS4 and associates with the spliceosome.

The protein resides in the nucleus. Functionally, cognate cyclin for CDKG1. Required for synapsis and male meiosis, and for the proper splicing of specific resistance (R) genes. Involved in regulation of DNA methylation and transcriptional silencing. The sequence is that of Cyclin-L1-1 (CYCL1-1) from Arabidopsis thaliana (Mouse-ear cress).